The sequence spans 176 residues: Ribosome maturation factor RimM (176 aa).

The PRC barrel domain maps to 101–170 (EGEYFESDLI…RITVELPEGL (70 aa)).

This sequence belongs to the RimM family. As to quaternary structure, binds ribosomal protein uS19.

Its subcellular location is the cytoplasm. Functionally, an accessory protein needed during the final step in the assembly of 30S ribosomal subunit, possibly for assembly of the head region. Essential for efficient processing of 16S rRNA. May be needed both before and after RbfA during the maturation of 16S rRNA. It has affinity for free ribosomal 30S subunits but not for 70S ribosomes. The chain is Ribosome maturation factor RimM from Solibacter usitatus (strain Ellin6076).